The primary structure comprises 351 residues: tRNA N6-adenosine threonylcarbamoyltransferase (351 aa).

2 residues coordinate Fe cation: His-111 and His-115. Substrate is bound by residues 134–138 (LVSGG), Asp-167, Gly-180, and Asn-276. Asp-304 provides a ligand contact to Fe cation.

It belongs to the KAE1 / TsaD family. Requires Fe(2+) as cofactor.

It localises to the cytoplasm. It carries out the reaction L-threonylcarbamoyladenylate + adenosine(37) in tRNA = N(6)-L-threonylcarbamoyladenosine(37) in tRNA + AMP + H(+). Functionally, required for the formation of a threonylcarbamoyl group on adenosine at position 37 (t(6)A37) in tRNAs that read codons beginning with adenine. Is involved in the transfer of the threonylcarbamoyl moiety of threonylcarbamoyl-AMP (TC-AMP) to the N6 group of A37, together with TsaE and TsaB. TsaD likely plays a direct catalytic role in this reaction. This Marinobacter nauticus (strain ATCC 700491 / DSM 11845 / VT8) (Marinobacter aquaeolei) protein is tRNA N6-adenosine threonylcarbamoyltransferase.